The sequence spans 342 residues: Phenylalanine--tRNA ligase alpha subunit (342 aa).

Glu-255 contributes to the Mg(2+) binding site.

Belongs to the class-II aminoacyl-tRNA synthetase family. Phe-tRNA synthetase alpha subunit type 1 subfamily. Tetramer of two alpha and two beta subunits. Requires Mg(2+) as cofactor.

The protein localises to the cytoplasm. The catalysed reaction is tRNA(Phe) + L-phenylalanine + ATP = L-phenylalanyl-tRNA(Phe) + AMP + diphosphate + H(+). This chain is Phenylalanine--tRNA ligase alpha subunit, found in Pelodictyon phaeoclathratiforme (strain DSM 5477 / BU-1).